Consider the following 594-residue polypeptide: MRWWAGAALLLAALLFGRPAAAMEAQPVAYSEFIQDVQARRVAYARITGQRLEAAYRDGTVRVVTLPPGEARLPLVLMQYGARVEFVRPADPIAFRTLLRFIPPLLILGAILWFTRRTAGGSGGLLTMEQSPARLYRVGEASVTLQDVAGLDEVKAELQEVIDFLREPERYRAMGARIPRGILLSGPPGTGKTLLARALAGEAGVPFFSASGSDFVELFAGTGAARVRALFDRARKAAPCIVFIDEIDALARRRGVGAGGGTEEREQTINQLLVEMDGFDSGEGVIVVAATNRPDVLDPAVLRPGRFDRHLTVDPPDRKGREQILAVHAREKRLSQAVALAEVARLTPGFTGADLANLLNEAALLAVRAGEREIGWPQVAMALERVTSGGPPRRVRAAAADRVRAAYHEAGHALAGLALRGSDRLVRVTILPHGRGLGHTLFRDQDEERYLHTRRDAFDRLTELLAGRAAEALVLGEVSAGAADDLERATGLAREMVTRWGMDADIGPLRLEHAVEGEESLRRADGAMRALVAAAERAARALLEARRSGLERLAAALLERERLEGPEVEALLELTPGEKPYIIVANSRGDEGNQ.

The Cytoplasmic segment spans residues 1–2 (MR). Residues 3–23 (WWAGAALLLAALLFGRPAAAM) form a helical membrane-spanning segment. Over 24-92 (EAQPVAYSEF…RVEFVRPADP (69 aa)) the chain is Extracellular. The helical transmembrane segment at 93–113 (IAFRTLLRFIPPLLILGAILW) threads the bilayer. The Cytoplasmic portion of the chain corresponds to 114–594 (FTRRTAGGSG…ANSRGDEGNQ (481 aa)). 186 to 193 (GPPGTGKT) provides a ligand contact to ATP. His408 contacts Zn(2+). Glu409 is a catalytic residue. 2 residues coordinate Zn(2+): His412 and Asp485.

The protein in the central section; belongs to the AAA ATPase family. It in the C-terminal section; belongs to the peptidase M41 family. As to quaternary structure, homohexamer. The cofactor is Zn(2+).

It is found in the cell membrane. Its function is as follows. Acts as a processive, ATP-dependent zinc metallopeptidase for both cytoplasmic and membrane proteins. Plays a role in the quality control of integral membrane proteins. This Symbiobacterium thermophilum (strain DSM 24528 / JCM 14929 / IAM 14863 / T) protein is ATP-dependent zinc metalloprotease FtsH 1.